The following is a 374-amino-acid chain: MVLWESPRQCSSWTLCEGFCWLLLLPVMLLIVARPVKLAAFPTSLSDCQTPTGWNCSGYDDRENDLFLCDTNTCKFDGECLRIGDTVTCVCQFKCNNDYVPVCGSNGESYQNECYLRQAACKQQSEILVVSEGSCATDAGSGSGDGVHEGSGETSQKETSTCDICQFGAECDEDAEDVWCVCNIDCSQTNFNPLCASDGKSYDNACQIKEASCQKQEKIEVMSLGRCQDNTTTTTKSEDGHYARTDYAENANKLEESAREHHIPCPEHYNGFCMHGKCEHSINMQEPSCRCDAGYTGQHCEKKDYSVLYVVPGPVRFQYVLIAAVIGTIQIAVICVVVLCITRKCPRSNRIHRQKQNTGHYSSDNTTRASTRLI.

An N-terminal signal peptide occupies residues 1 to 40; sequence MVLWESPRQCSSWTLCEGFCWLLLLPVMLLIVARPVKLAA. Topologically, residues 41–320 are extracellular; that stretch reads FPTSLSDCQT…VPGPVRFQYV (280 aa). Kazal-like domains are found at residues 90 to 137 and 181 to 229; these read VCQF…SCAT and VCNI…RCQD. 6 cysteine pairs are disulfide-bonded: Cys91-Cys121, Cys95-Cys114, Cys103-Cys135, Cys182-Cys213, Cys186-Cys206, and Cys195-Cys227. Asn204 is a glycosylation site (N-linked (GlcNAc...) (complex) asparagine; atypical). N-linked (GlcNAc...) asparagine glycosylation occurs at Asn230. The EGF-like domain maps to 261–301; the sequence is HHIPCPEHYNGFCMHGKCEHSINMQEPSCRCDAGYTGQHCE. Intrachain disulfides connect Cys265–Cys278, Cys273–Cys289, and Cys291–Cys300. Positions 303 to 320 are required for shedding; that stretch reads KDYSVLYVVPGPVRFQYV. Residues 321 to 341 traverse the membrane as a helical segment; the sequence is LIAAVIGTIQIAVICVVVLCI. At 342–374 the chain is on the cytoplasmic side; sequence TRKCPRSNRIHRQKQNTGHYSSDNTTRASTRLI. The segment at 353-374 is disordered; the sequence is RQKQNTGHYSSDNTTRASTRLI. The span at 356 to 374 shows a compositional bias: polar residues; the sequence is QNTGHYSSDNTTRASTRLI.

This sequence belongs to the tomoregulin family. Post-translationally, O-glycosylated; contains chondroitin sulfate glycosaminoglycans. In terms of processing, a soluble form (TMEFF2-ECD) is produced by proteolytic shedding. This shedding can be induced by phorbol ester or pro-inflammatory cytokines such as TNFalpha, and is mediated by ADAM17. As to expression, highly expressed in adult and fetal brain, spinal cord and prostate. Expressed in all brain regions except the pituitary gland, with highest levels in amygdala and corpus callosum. Expressed in the pericryptal myofibroblasts and other stromal cells of normal colonic mucosa. Expressed in prostate carcinoma. Down-regulated in colorectal cancer. Present in Alzheimer disease plaques (at protein level). Isoform 3 is expressed weakly in testis and at high levels in normal and cancerous prostate.

The protein resides in the membrane. It localises to the secreted. Its function is as follows. May be a survival factor for hippocampal and mesencephalic neurons. The shedded form up-regulates cancer cell proliferation, probably by promoting ERK1/2 phosphorylation. The chain is Tomoregulin-2 (TMEFF2) from Homo sapiens (Human).